A 78-amino-acid chain; its full sequence is NAD(P)H-quinone oxidoreductase subunit O (78 aa).

It belongs to the complex I NdhO subunit family. In terms of assembly, NDH-1 can be composed of about 15 different subunits; different subcomplexes with different compositions have been identified which probably have different functions.

Its subcellular location is the cellular thylakoid membrane. The catalysed reaction is a plastoquinone + NADH + (n+1) H(+)(in) = a plastoquinol + NAD(+) + n H(+)(out). It catalyses the reaction a plastoquinone + NADPH + (n+1) H(+)(in) = a plastoquinol + NADP(+) + n H(+)(out). NDH-1 shuttles electrons from an unknown electron donor, via FMN and iron-sulfur (Fe-S) centers, to quinones in the respiratory and/or the photosynthetic chain. The immediate electron acceptor for the enzyme in this species is believed to be plastoquinone. Couples the redox reaction to proton translocation, and thus conserves the redox energy in a proton gradient. Cyanobacterial NDH-1 also plays a role in inorganic carbon-concentration. In Prochlorococcus marinus (strain MIT 9215), this protein is NAD(P)H-quinone oxidoreductase subunit O.